Consider the following 642-residue polypeptide: 3D-(3,5/4)-trihydroxycyclohexane-1,2-dione hydrolase (642 aa).

Glu-71 is a binding site for thiamine diphosphate. The thiamine pyrophosphate binding stretch occupies residues 446–526 (SLPGDVQRIW…INILVFDNSG (81 aa)). Positions 497 and 524 each coordinate Mg(2+).

Belongs to the TPP enzyme family. It depends on Mg(2+) as a cofactor. Requires thiamine diphosphate as cofactor.

It carries out the reaction 3D-3,5/4-trihydroxycyclohexane-1,2-dione + H2O = 5-deoxy-D-glucuronate + H(+). The protein operates within polyol metabolism; myo-inositol degradation into acetyl-CoA; acetyl-CoA from myo-inositol: step 3/7. In terms of biological role, involved in the cleavage of the C1-C2 bond of 3D-(3,5/4)-trihydroxycyclohexane-1,2-dione (THcHDO) to yield 5-deoxy-glucuronate (5DG). The polypeptide is 3D-(3,5/4)-trihydroxycyclohexane-1,2-dione hydrolase (Lacticaseibacillus casei (Lactobacillus casei)).